A 400-amino-acid chain; its full sequence is MQRRQRAPPASQPAQDGGRSEDVEVQFSAGRLGSAAPAGPPARGTAEDEERLEREHFWKVINAFRYYGTSMHERVNRTERQFRSLPENQQKLLPQFPLHLDKIRKCIDHNQEILLTIVNDCIHMFENKEYGEDANGKIMPASTFDMDKLKSTLKQFVRDWSETGKAERDACYKPIIKEIIKNFPKERWDPSKVNILVPGAGLGRLAWEVAMLGYACQGNEWSFFMLFSSNFVLNRCSEINKYKLYPWIHQFSNNRRSADQIRPILFPDVDPHSLPPGSNFSMTAGDFQEIYSECNAWDCIATCFFIDTAHNVIDYIDTIWRILKPGGIWINLGPLLYHFENLANELSIELSYEDIKNVVLQYGFQLEVEKESVLSTYTVNDLSMMKYYYECVLFVVRKPQ.

Positions Met-1–Arg-51 are disordered. Positions Ser-28–Gly-44 are enriched in low complexity. S-adenosyl-L-methionine is bound by residues Gln-155, Arg-158, Gly-199, Glu-220, Asp-286, Phe-287, and Cys-303. Asp-307 provides a ligand contact to carnosine. Tyr-315 contacts S-adenosyl-L-methionine. Residues His-338 and Tyr-389 each contribute to the carnosine site.

The protein belongs to the carnosine N-methyltransferase family. Homodimer. Each monomer accommodates one molecule of carnosine in its active pocket, precisely anchoring the histidine imidazole ring such that only N1 is exposed and deprotonated for methylation.

The protein resides in the cytoplasm. Its subcellular location is the cytosol. It is found in the nucleus. It catalyses the reaction carnosine + S-adenosyl-L-methionine = anserine + S-adenosyl-L-homocysteine + H(+). N-methyltransferase that catalyzes the formation of anserine (beta-alanyl-N(Pi)-methyl-L-histidine) from carnosine. Anserine, a methylated derivative of carnosine (beta-alanyl-L-histidine), is an abundant constituent of vertebrate skeletal muscles. Also methylates other L-histidine-containing di- and tripeptides such as Gly-Gly-His, Gly-His and homocarnosine (GABA-His). This chain is Carnosine N-methyltransferase, found in Mus musculus (Mouse).